Here is a 771-residue protein sequence, read N- to C-terminus: Myotubularin-related protein 10 (771 aa).

The 441-residue stretch at 217–657 (FETYSDWDRE…THIKLWKLCY (441 aa)) folds into the Myotubularin phosphatase domain. A phosphoserine mark is found at Ser603 and Ser745.

It belongs to the protein-tyrosine phosphatase family. Non-receptor class myotubularin subfamily.

This Mus musculus (Mouse) protein is Myotubularin-related protein 10 (Mtmr10).